The sequence spans 301 residues: ATP synthase gamma chain (301 aa).

This sequence belongs to the ATPase gamma chain family. F-type ATPases have 2 components, CF(1) - the catalytic core - and CF(0) - the membrane proton channel. CF(1) has five subunits: alpha(3), beta(3), gamma(1), delta(1), epsilon(1). CF(0) has three main subunits: a, b and c.

It is found in the cell inner membrane. In terms of biological role, produces ATP from ADP in the presence of a proton gradient across the membrane. The gamma chain is believed to be important in regulating ATPase activity and the flow of protons through the CF(0) complex. The chain is ATP synthase gamma chain from Bordetella petrii (strain ATCC BAA-461 / DSM 12804 / CCUG 43448).